We begin with the raw amino-acid sequence, 254 residues long: UPF0246 protein CPR_2119 (254 aa).

It belongs to the UPF0246 family.

The protein is UPF0246 protein CPR_2119 of Clostridium perfringens (strain SM101 / Type A).